The sequence spans 254 residues: tRNA pseudouridine synthase A (254 aa).

D52 (nucleophile) is an active-site residue. Y111 provides a ligand contact to substrate.

It belongs to the tRNA pseudouridine synthase TruA family. Homodimer.

The enzyme catalyses uridine(38/39/40) in tRNA = pseudouridine(38/39/40) in tRNA. Formation of pseudouridine at positions 38, 39 and 40 in the anticodon stem and loop of transfer RNAs. This Methylobacterium nodulans (strain LMG 21967 / CNCM I-2342 / ORS 2060) protein is tRNA pseudouridine synthase A.